Here is a 260-residue protein sequence, read N- to C-terminus: Trans-aconitate 2-methyltransferase (260 aa).

The protein belongs to the methyltransferase superfamily. Tam family.

Its subcellular location is the cytoplasm. It carries out the reaction trans-aconitate + S-adenosyl-L-methionine = (E)-3-(methoxycarbonyl)pent-2-enedioate + S-adenosyl-L-homocysteine. Its function is as follows. Catalyzes the S-adenosylmethionine monomethyl esterification of trans-aconitate. The chain is Trans-aconitate 2-methyltransferase from Methylobacterium radiotolerans (strain ATCC 27329 / DSM 1819 / JCM 2831 / NBRC 15690 / NCIMB 10815 / 0-1).